Here is a 120-residue protein sequence, read N- to C-terminus: uncharacterized protein (120 aa).

Its subcellular location is the cytoplasm. The protein localises to the nucleus. This is an uncharacterized protein from Schizosaccharomyces pombe (strain 972 / ATCC 24843) (Fission yeast).